The sequence spans 513 residues: Zinc finger CCCH-type with G patch domain-containing protein (513 aa).

A C3H1-type zinc finger spans residues 155–178; that stretch reads PCSYYLEGECRFDEAKCRFSHGAL. Acidic residues-rich tracts occupy residues 252-261 and 273-283; these read DQDEDDELSS and SDEAESDMDDL. Residues 252–283 are disordered; that stretch reads DQDEDDELSSEESTSSMRDASSDEAESDMDDL. In terms of domain architecture, G-patch spans 312–358; sequence TRGIGSKLMEKMGYIHGTGLGSDGRGIVTPVSAQILPQGRSLDACME. The span at 477–495 shows a compositional bias: polar residues; the sequence is QVQMQSHKQELATLQAQER. Positions 477 to 513 are disordered; sequence QVQMQSHKQELATLQAQERSLSKEQQTRKSKNKMFEF. The span at 496–513 shows a compositional bias: basic and acidic residues; it reads SLSKEQQTRKSKNKMFEF.

It localises to the nucleus. In terms of biological role, transcription repressor. This chain is Zinc finger CCCH-type with G patch domain-containing protein, found in Drosophila simulans (Fruit fly).